Here is a 250-residue protein sequence, read N- to C-terminus: 5-oxoprolinase subunit A (250 aa).

This sequence belongs to the LamB/PxpA family. Forms a complex composed of PxpA, PxpB and PxpC.

It catalyses the reaction 5-oxo-L-proline + ATP + 2 H2O = L-glutamate + ADP + phosphate + H(+). Catalyzes the cleavage of 5-oxoproline to form L-glutamate coupled to the hydrolysis of ATP to ADP and inorganic phosphate. The protein is 5-oxoprolinase subunit A of Streptomyces griseus subsp. griseus (strain JCM 4626 / CBS 651.72 / NBRC 13350 / KCC S-0626 / ISP 5235).